The following is a 340-amino-acid chain: Phosphate acyltransferase (340 aa).

It belongs to the PlsX family. In terms of assembly, homodimer. Probably interacts with PlsY.

The protein resides in the cytoplasm. The enzyme catalyses a fatty acyl-[ACP] + phosphate = an acyl phosphate + holo-[ACP]. The protein operates within lipid metabolism; phospholipid metabolism. Catalyzes the reversible formation of acyl-phosphate (acyl-PO(4)) from acyl-[acyl-carrier-protein] (acyl-ACP). This enzyme utilizes acyl-ACP as fatty acyl donor, but not acyl-CoA. This Clostridioides difficile (strain 630) (Peptoclostridium difficile) protein is Phosphate acyltransferase.